Here is a 237-residue protein sequence, read N- to C-terminus: CDP-diacylglycerol--inositol 3-phosphatidyltransferase (237 aa).

At 1 to 12 (MGKNEQKDPNVY) the chain is on the cytoplasmic side. Residues 13–33 (FFVPNLIGFTRVFLVLISLYF) traverse the membrane as a helical segment. Over 34-41 (MSWHPNYC) the chain is Lumenal. Residues 42–62 (TIVYLYSSLLDAFDGWAARKL) traverse the membrane as a helical segment. Residues Asp-52 and Asp-55 each contribute to the Mg(2+) site. Residues Gly-56, Arg-60, and Thr-66 each contribute to the a CDP-1,2-diacyl-sn-glycerol site. Topologically, residues 63-71 (HQATNFGAI) are cytoplasmic. A helical transmembrane segment spans residues 72 to 92 (LDMVTDRCATSCLLCFLCAAY). Mg(2+) is bound by residues Asp-73 and Asp-77. Catalysis depends on Asp-77, which acts as the Proton acceptor. Over 93–94 (PK) the chain is Lumenal. The chain crosses the membrane as a helical span at residues 95 to 115 (YAIIFQLLVSLDLASHYMHMY). Topologically, residues 116-144 (STLHQGASSHKTVTKKHNWMLRLYYGNNK) are cytoplasmic. The chain crosses the membrane as a helical span at residues 145–165 (VLFIFCAANEMFFVALYLLSF). The Lumenal portion of the chain corresponds to 166-185 (TPRTPPKLGYLPVPSFIYST). Residues 186–206 (GELPLSYPTLLAVLCGPICLA) traverse the membrane as a helical segment. At 207-237 (KQIINVVQLVNAANALVKMDVEQRRAAKKLQ) the chain is on the cytoplasmic side.

Belongs to the CDP-alcohol phosphatidyltransferase class-I family. Mn(2+) is required as a cofactor. Mg(2+) serves as cofactor.

The protein resides in the microsome membrane. It localises to the endoplasmic reticulum membrane. The protein localises to the golgi apparatus membrane. It is found in the mitochondrion outer membrane. It catalyses the reaction a CDP-1,2-diacyl-sn-glycerol + myo-inositol = a 1,2-diacyl-sn-glycero-3-phospho-(1D-myo-inositol) + CMP + H(+). In terms of biological role, catalyzes the synthesis of phosphatidylinositol (PtdIns). The sequence is that of CDP-diacylglycerol--inositol 3-phosphatidyltransferase (pis1) from Schizosaccharomyces pombe (strain 972 / ATCC 24843) (Fission yeast).